We begin with the raw amino-acid sequence, 1578 residues long: Cilia- and flagella-associated protein 74 (1578 aa).

The segment covering 1–14 has biased composition (acidic residues); sequence MEEPTVQFSDEDLV. Disordered regions lie at residues 1–21 and 33–67; these read MEEP…PPMD and EVER…TTKD. The segment covering 33–65 has biased composition (basic and acidic residues); it reads EVERPSEGLEDEGSHSSAKKESKGAEKMRKSTT. Coiled-coil stretches lie at residues 103-156 and 330-378; these read RQRM…QSKI and KYLF…RRQH.

It belongs to the CFAP74 family.

It localises to the cytoplasm. It is found in the cytoskeleton. The protein localises to the cilium axoneme. The protein resides in the flagellum axoneme. As part of the central apparatus of the cilium axoneme may play a role in cilium movement. May play an important role in sperm architecture and function. The polypeptide is Cilia- and flagella-associated protein 74 (Mus musculus (Mouse)).